Consider the following 508-residue polypeptide: Arabinose import ATP-binding protein AraG (508 aa).

ABC transporter domains lie at 5-240 and 250-496; these read LEFQ…MVGR and ARTL…LPDA. 37-44 provides a ligand contact to ATP; it reads GENGAGKS.

The protein belongs to the ABC transporter superfamily. Arabinose importer (TC 3.A.1.2.2) family. As to quaternary structure, the complex is composed of two ATP-binding proteins (AraG), two transmembrane proteins (AraH) and a solute-binding protein (AraF).

It is found in the cell inner membrane. The catalysed reaction is L-arabinose(out) + ATP + H2O = L-arabinose(in) + ADP + phosphate + H(+). Functionally, part of the ABC transporter complex AraFGH involved in arabinose import. Responsible for energy coupling to the transport system. This Rhizobium meliloti (strain 1021) (Ensifer meliloti) protein is Arabinose import ATP-binding protein AraG.